Here is a 205-residue protein sequence, read N- to C-terminus: Holliday junction branch migration complex subunit RuvA (205 aa).

Positions 1-64 (MIGKLKGVVD…EDQIRLFGFS (64 aa)) are domain I. Residues 65–143 (SAAERDWFRL…GFSASEPLAA (79 aa)) form a domain II region. Residues 144–152 (QLGGGGVAS) are flexible linker. A domain III region spans residues 153 to 205 (AQGGAAADAVSALVNLGYGVPQANAAIAAALRGAGEGAKTEVLIRLGLKELAK).

It belongs to the RuvA family. In terms of assembly, homotetramer. Forms an RuvA(8)-RuvB(12)-Holliday junction (HJ) complex. HJ DNA is sandwiched between 2 RuvA tetramers; dsDNA enters through RuvA and exits via RuvB. An RuvB hexamer assembles on each DNA strand where it exits the tetramer. Each RuvB hexamer is contacted by two RuvA subunits (via domain III) on 2 adjacent RuvB subunits; this complex drives branch migration. In the full resolvosome a probable DNA-RuvA(4)-RuvB(12)-RuvC(2) complex forms which resolves the HJ.

Its subcellular location is the cytoplasm. The RuvA-RuvB-RuvC complex processes Holliday junction (HJ) DNA during genetic recombination and DNA repair, while the RuvA-RuvB complex plays an important role in the rescue of blocked DNA replication forks via replication fork reversal (RFR). RuvA specifically binds to HJ cruciform DNA, conferring on it an open structure. The RuvB hexamer acts as an ATP-dependent pump, pulling dsDNA into and through the RuvAB complex. HJ branch migration allows RuvC to scan DNA until it finds its consensus sequence, where it cleaves and resolves the cruciform DNA. The sequence is that of Holliday junction branch migration complex subunit RuvA from Xanthobacter autotrophicus (strain ATCC BAA-1158 / Py2).